We begin with the raw amino-acid sequence, 187 residues long: Cell division protein SepF (187 aa).

The segment at 21–97 (EVEVPDKQQQ…ATPNNASQES (77 aa)) is disordered. Composition is skewed to polar residues over residues 38-63 (EQSQQTTKQNAIKSVPQKSASRYTTT) and 70-97 (RMSNYSKNNSRNVVTMNNATPNNASQES).

The protein belongs to the SepF family. In terms of assembly, homodimer. Interacts with FtsZ.

Its subcellular location is the cytoplasm. Functionally, cell division protein that is part of the divisome complex and is recruited early to the Z-ring. Probably stimulates Z-ring formation, perhaps through the cross-linking of FtsZ protofilaments. Its function overlaps with FtsA. This chain is Cell division protein SepF, found in Staphylococcus aureus (strain MRSA252).